The primary structure comprises 190 residues: Ion-translocating oxidoreductase complex subunit B (190 aa).

The segment at 1-26 is hydrophobic; that stretch reads MTALWIAIAALSALGLLFGLVLGYAA. One can recognise a 4Fe-4S domain in the interval 32-90; that stretch reads EEDPVAEQVDEILPQSQCGQCGYPGCRPYAEAVANGEMINKCAPGGEQVMLKLAELLNV. [4Fe-4S] cluster is bound by residues C49, C52, C57, C73, C115, C118, C121, C125, C145, C148, C151, and C155. 4Fe-4S ferredoxin-type domains are found at residues 106–135 and 136–165; these read QVAYIDEANCIGCTKCIQACPVDAIVGATR and AMHTVITDLCTGCDLCVAPCPTDCIEMRPV.

The protein belongs to the 4Fe4S bacterial-type ferredoxin family. RnfB subfamily. As to quaternary structure, the complex is composed of six subunits: RnfA, RnfB, RnfC, RnfD, RnfE and RnfG. It depends on [4Fe-4S] cluster as a cofactor.

It localises to the cell inner membrane. Functionally, part of a membrane-bound complex that couples electron transfer with translocation of ions across the membrane. The sequence is that of Ion-translocating oxidoreductase complex subunit B from Serratia proteamaculans (strain 568).